The chain runs to 291 residues: 33 kDa chaperonin (291 aa).

2 disulfides stabilise this stretch: Cys237–Cys239 and Cys270–Cys273.

Belongs to the HSP33 family. In terms of processing, under oxidizing conditions two disulfide bonds are formed involving the reactive cysteines. Under reducing conditions zinc is bound to the reactive cysteines and the protein is inactive.

It localises to the cytoplasm. Functionally, redox regulated molecular chaperone. Protects both thermally unfolding and oxidatively damaged proteins from irreversible aggregation. Plays an important role in the bacterial defense system toward oxidative stress. The polypeptide is 33 kDa chaperonin (Clostridioides difficile (strain 630) (Peptoclostridium difficile)).